A 144-amino-acid polypeptide reads, in one-letter code: Large ribosomal subunit protein uL16 (144 aa).

It belongs to the universal ribosomal protein uL16 family. In terms of assembly, part of the 50S ribosomal subunit.

Functionally, binds 23S rRNA and is also seen to make contacts with the A and possibly P site tRNAs. The sequence is that of Large ribosomal subunit protein uL16 from Bacillus cereus (strain ATCC 10987 / NRS 248).